The following is a 316-amino-acid chain: MIKLGIVMDPIANINIKKDSSFAMLLEAQRRGYELHYMEMGDLYLINGEARAHTRTLNVKQNYEEWFSFVGEQDLPLADLDVILMRKDPPFDTEFIYATYILERAEEKGTLIVNKPQSLRDCNEKLFTAWFSDLTPETLVTRNKAQLKAFWEKHSDIILKPLDGMGGASIFRVKEGDPNLGVIAETLTEHGTCYCMAQNYLPAIKDGDKRVLVVDGEPVPYCLARIPQGGETRGNLAAGGRGEPRPLTESDWKIARQIGPTLKEKGLIFVGLDIIGDRLTEINVTSPTCIREIEAEFPVSITGMLMDAIEARLQQQ.

The region spanning 125–310 is the ATP-grasp domain; the sequence is KLFTAWFSDL…ITGMLMDAIE (186 aa). 151 to 207 lines the ATP pocket; sequence WEKHSDIILKPLDGMGGASIFRVKEGDPNLGVIAETLTEHGTCYCMAQNYLPAIKDG. 2 residues coordinate Mg(2+): Glu281 and Asn283.

The protein belongs to the prokaryotic GSH synthase family. The cofactor is Mg(2+). It depends on Mn(2+) as a cofactor.

It catalyses the reaction gamma-L-glutamyl-L-cysteine + glycine + ATP = glutathione + ADP + phosphate + H(+). Its pathway is sulfur metabolism; glutathione biosynthesis; glutathione from L-cysteine and L-glutamate: step 2/2. This chain is Glutathione synthetase, found in Shigella flexneri.